The following is a 282-amino-acid chain: NH(3)-dependent NAD(+) synthetase (282 aa).

Residue 51–58 (GISGGVDS) participates in ATP binding. D57 contributes to the Mg(2+) binding site. Residue R148 participates in deamido-NAD(+) binding. Position 168 (T168) interacts with ATP. Position 173 (E173) interacts with Mg(2+). Deamido-NAD(+) contacts are provided by K181 and D188. K197 and T219 together coordinate ATP. 268 to 269 (HK) is a deamido-NAD(+) binding site.

The protein belongs to the NAD synthetase family. Homodimer.

The catalysed reaction is deamido-NAD(+) + NH4(+) + ATP = AMP + diphosphate + NAD(+) + H(+). It functions in the pathway cofactor biosynthesis; NAD(+) biosynthesis; NAD(+) from deamido-NAD(+) (ammonia route): step 1/1. Functionally, catalyzes the ATP-dependent amidation of deamido-NAD to form NAD. Uses ammonia as a nitrogen source. This Burkholderia ambifaria (strain MC40-6) protein is NH(3)-dependent NAD(+) synthetase.